The sequence spans 77 residues: Translation initiation factor IF-1, chloroplastic (77 aa).

Residues 1-71 (MKEQKWIHEG…TRGRIIYRLR (71 aa)) enclose the S1-like domain.

This sequence belongs to the IF-1 family. Component of the 30S ribosomal translation pre-initiation complex which assembles on the 30S ribosome in the order IF-2 and IF-3, IF-1 and N-formylmethionyl-tRNA(fMet); mRNA recruitment can occur at any time during PIC assembly.

It is found in the plastid. The protein localises to the chloroplast. Functionally, one of the essential components for the initiation of protein synthesis. Stabilizes the binding of IF-2 and IF-3 on the 30S subunit to which N-formylmethionyl-tRNA(fMet) subsequently binds. Helps modulate mRNA selection, yielding the 30S pre-initiation complex (PIC). Upon addition of the 50S ribosomal subunit IF-1, IF-2 and IF-3 are released leaving the mature 70S translation initiation complex. In Brexia madagascariensis, this protein is Translation initiation factor IF-1, chloroplastic.